Here is a 263-residue protein sequence, read N- to C-terminus: Transmembrane protein 176B (263 aa).

The next 4 helical transmembrane spans lie at 61–81, 89–109, 125–145, and 197–217; these read LGVT…CLYF, ASGC…GIVI, LLLA…KSLI, and LFLA…VVSV. The disordered stretch occupies residues 242-263; sequence KKLLGGDSAPASPTKEKIPVTP. 2 positions are modified to phosphoserine: Ser-249 and Ser-253.

This sequence belongs to the TMEM176 family. As to expression, expressed in spleen by a variety of myeloid cells including macrophages and dendritic cells (at protein level). Ubiquitously expressed with higher expression in lymphoid tissues.

It localises to the nucleus membrane. In terms of biological role, required for the development of cerebellar granule cells. May play a role in the process of maturation of dendritic cells. The chain is Transmembrane protein 176B (Tmem176b) from Rattus norvegicus (Rat).